Consider the following 883-residue polypeptide: Serine/threonine-protein kinase greatwall (883 aa).

At M1 the chain carries N-acetylmethionine. Positions 35 to 839 (FTIVKPISRG…IKELKCHPLF (805 aa)) constitute a Protein kinase domain. ATP is bound by residues 41–49 (ISRGAFGKV) and K62. The Proton acceptor role is filled by D156. Phosphothreonine is present on residues T209 and T224. Residues S295, S373, and S456 each carry the phosphoserine modification. T523 carries the phosphothreonine modification. Phosphoserine is present on residues S555, S559, S634, S661, and S672. Phosphothreonine is present on T726. Residue S729 is modified to Phosphoserine. T745 is subject to Phosphothreonine; by CDK1. Residues 840–883 (SDVDWENLQHQTMPFIPQPDDETDTSYFEARNNAQHLTVSGFSL) enclose the AGC-kinase C-terminal domain. S879 and S882 each carry phosphoserine.

It belongs to the protein kinase superfamily. AGC Ser/Thr protein kinase family. Post-translationally, phosphorylation at Thr-745 by CDK1 during M phase activates its kinase activity. Maximum phosphorylation occurs in prometaphase.

It localises to the cytoplasm. Its subcellular location is the cytoskeleton. It is found in the microtubule organizing center. The protein localises to the centrosome. The protein resides in the nucleus. The enzyme catalyses L-seryl-[protein] + ATP = O-phospho-L-seryl-[protein] + ADP + H(+). It catalyses the reaction L-threonyl-[protein] + ATP = O-phospho-L-threonyl-[protein] + ADP + H(+). Its function is as follows. Serine/threonine kinase that plays a key role in M phase by acting as a regulator of mitosis entry and maintenance. Acts by promoting the inactivation of protein phosphatase 2A (PP2A) during M phase: does not directly inhibit PP2A but acts by mediating phosphorylation and subsequent activation of ARPP19 and ENSA at 'Ser-62' and 'Ser-67', respectively. ARPP19 and ENSA are phosphatase inhibitors that specifically inhibit the PPP2R2D (PR55-delta) subunit of PP2A. Inactivation of PP2A during M phase is essential to keep cyclin-B1-CDK1 activity high. Following DNA damage, it is also involved in checkpoint recovery by being inhibited. The sequence is that of Serine/threonine-protein kinase greatwall (MASTL) from Canis lupus familiaris (Dog).